We begin with the raw amino-acid sequence, 564 residues long: M protein, serotype 12 (564 aa).

The N-terminal stretch at 1–41 (MAKNTTNRHYSLRKLKTGTASVAVALTVVGAGLVAGQTVRA) is a signal peptide. The stretch at 44-505 (SDLVAEKQRL…RAGKASDSQT (462 aa)) forms a coiled coil. C repeat units follow at residues 285–319 (KQLEEQKQILDASRKGTARDLEAVRQAKKATEAEL), 327–361 (AKVTEQKQILDASRKGTARDLEAVRKSKKQQVEAA), 363–397 (KQLEEQNKISEASRKGLRRDLDTSREAKKQVEKDL), and 405–439 (DKVKEEKQISDASRQGLRRDLDASREAKKQVEKAL). 2 disordered regions span residues 372-391 (SEASRKGLRRDLDTSREAKK) and 404-438 (LDKVKEEKQISDASRQGLRRDLDASREAKKQVEKA). Composition is skewed to basic and acidic residues over residues 404–413 (LDKVKEEKQI) and 421–438 (LRRDLDASREAKKQVEKA). 4 D repeats span residues 472–477 (AKLEAE), 478–483 (AKALKE), 486–491 (AKQAEE), and 493–498 (AKLRAG). A disordered region spans residues 493-550 (AKLRAGKASDSQTPDAKPGNKAVPGKGQAPQAGTKPNQNKAPMKETKRQLPSTGETAN). The short motif at 542–546 (LPSTG) is the LPXTG sorting signal element. T545 carries the post-translational modification Pentaglycyl murein peptidoglycan amidated threonine. Residues 546–564 (GETANPFFTAAALTVMAAA) constitute a propeptide, removed by sortase.

Belongs to the M protein family.

The protein resides in the secreted. The protein localises to the cell wall. Functionally, this protein is one of the different antigenic serotypes of protein M. Protein M is closely associated with virulence of the bacterium and can render the organism resistant to phagocytosis. The sequence is that of M protein, serotype 12 (emm12) from Streptococcus pyogenes.